Here is a 3907-residue protein sequence, read N- to C-terminus: Cyclo-acetoacetyl-L-tryptophan synthase (3907 aa).

The region spanning 2–436 (KTPIAVVGTA…GTNAHAIIES (435 aa)) is the Ketosynthase family 3 (KS3) domain. Active-site for beta-ketoacyl synthase activity residues include Cys176, His313, and His356. Positions 555–870 (IFTGQGAQWA…SLLRRGQNDL (316 aa)) are malonyl-CoA:ACP transacylase (MAT) domain. The interval 937-1074 (HPLLGRRSAD…ARLTLHLGDA (138 aa)) is N-terminal hotdog fold. A dehydratase (DH) domain region spans residues 937–1236 (HPLLGRRSAD…GLVMKSVPQP (300 aa)). Residues 937 to 1239 (HPLLGRRSAD…MKSVPQPDTS (303 aa)) enclose the PKS/mFAS DH domain. The segment at 1092-1239 (LAPVDVADLY…MKSVPQPDTS (148 aa)) is C-terminal hotdog fold. The segment at 1386–1573 (AAMFSQLSKD…FSGIDHIFHD (188 aa)) is methyltransferase (MT) domain. The interval 2064–2238 (GTYFMIDMAT…VGSVMALGMV (175 aa)) is ketoreductase (KR)domain. Residues 2324–2352 (TKEGQYAEQEDSPSLLVPDEQLQESGPGR) are disordered. Residues 2356 to 2430 (DDLLARLSGK…LCEKAVPKPN (75 aa)) form the Carrier 1 domain. O-(pantetheine 4'-phosphoryl)serine is present on Ser2390. Residues 2504–2926 (MSPHQSQIWF…SSNPLISVQS (423 aa)) form a condensation region. Residues 2959-3359 (FQDMVDQYGD…GSLILLGRMD (401 aa)) are adenylation. The region spanning 3474 to 3549 (KRLTLGEGEL…QMALKVDARK (76 aa)) is the Carrier 2 domain. Position 3509 is an O-(pantetheine 4'-phosphoryl)serine (Ser3509). The segment at 3594-3813 (LTGSTSFLGR…DFQKVEIIAE (220 aa)) is reductase (RED) domain.

This sequence in the C-terminal section; belongs to the NRP synthetase family.

It catalyses the reaction L-tryptophan + malonyl-CoA + acetyl-CoA = cyclo-acetoacetyl-L-tryptophan + CO2 + 2 CoA + H2O. It participates in secondary metabolite biosynthesis. Functionally, hybrid PKS-NRPS synthetase; part of the gene cluster that mediates the biosynthesis of the fungal neurotoxin cyclopiazonic acid (CPA), a nanomolar inhibitor of Ca(2+)-ATPase with a unique pentacyclic indole tetramic acid scaffold. The hybrid two module polyketide synthase-nonribosomal peptide synthetase (PKS-NRPS) cpaS incorporates acetyl-CoA, malonyl-CoA, and tryptophan (Trp) and utilizes a C-terminal redox-incompetent reductase domain to make and release the tryptophan tetramic acid, cyclo-acetoacetyl-L-tryptophan (c-AATrp), as the first intermediate in the pathway. CpaS catalyzes a Dieckmann-type cyclization on the N-acetoacetyl-Trp intermediate bound in thioester linkage to the phosphopantetheinyl arm of the T domain to form and release c-AATrp. CpaD then regiospecifically dimethylallylates c-AATrp to form beta-cyclopiazonic acid. CpaD discriminates against free Trp but accepts tryptophan-containing thiohydantoins, diketopiperazines, and linear peptides as substrates for C4-prenylation and also acts as regiospecific O-dimethylallyltransferase (DMAT) on a tyrosine-derived tetramic acid. The beta-cyclopiazonate dehydrogenase cpaO then carries out the dehydrogenation of beta-CPA to yield an unstable enimine product, which is captured by intramolecular cyclization to create the pentacyclic fused scaffold of alpha-cyclopiazonate. Finally, the cytochrome P450 monooxygenase cpaH mediates the conversion of CPA into the less toxic 2-oxocyclopiazonic acid, the end product of the CPA pathway in A.oryza. This chain is Cyclo-acetoacetyl-L-tryptophan synthase, found in Aspergillus oryzae (Yellow koji mold).